Consider the following 847-residue polypeptide: uncharacterized protein (847 aa).

Over residues 116–126 (TGSSELTTSKT) the composition is skewed to polar residues. Disordered stretches follow at residues 116–153 (TGSS…TPIE), 208–245 (LKNF…RLSP), and 361–392 (DLEK…SNVI). The segment covering 128–145 (IDVDTKEQENRLKQKAEA) has biased composition (basic and acidic residues). A compositionally biased stretch (polar residues) spans 368 to 378 (SSSASLSTNKL).

This is an uncharacterized protein from Caenorhabditis elegans.